Here is a 290-residue protein sequence, read N- to C-terminus: UPF0761 membrane protein YihY (290 aa).

Topologically, residues 1–43 are cytoplasmic; the sequence is MLKTVHQKAGRHTRPVRAWLKLLWQRIDEDNMTTLAGNLAYVS. The helical transmembrane segment at 44–64 threads the bilayer; sequence LLSLVPLIAVVFALFAAFPMF. Over 65–103 the chain is Periplasmic; that stretch reads SDVSIQLRHFIFANFMPATGDVIQRYIEQFVANSNKMTA. Residues 104–124 traverse the membrane as a helical segment; that stretch reads VGACGLIVTALLLMYAIDSAL. Residues 125 to 139 are Cytoplasmic-facing; it reads NTIWRSKRTRPKVYS. A helical transmembrane segment spans residues 140–160; that stretch reads FAVYWMILTLGPLLAGVSLAI. Residues 161 to 179 are Periplasmic-facing; it reads SSYLLSLRWASDLNTVIDN. The helical transmembrane segment at 180-200 threads the bilayer; that stretch reads VLHILPLLLSWISFWLLYSIV. At 201 to 209 the chain is on the cytoplasmic side; that stretch reads PTTRVPNRD. The helical transmembrane segment at 210-230 threads the bilayer; the sequence is ALVGAFVAALLFEAGKKGFAL. Topologically, residues 231-243 are periplasmic; sequence YITMFPSYQLIYG. Residues 244–264 traverse the membrane as a helical segment; the sequence is VLAVIPILFVWVYWTWCIVLL. The Cytoplasmic portion of the chain corresponds to 265–290; it reads GAEITVTLGEYRKLKQAAEQEEADQP.

This sequence belongs to the UPF0761 family.

It localises to the cell inner membrane. The protein is UPF0761 membrane protein YihY of Salmonella typhimurium (strain LT2 / SGSC1412 / ATCC 700720).